We begin with the raw amino-acid sequence, 124 residues long: V-type proton ATPase subunit F 1 (124 aa).

S87 is subject to Phosphoserine.

This sequence belongs to the V-ATPase F subunit family. As to quaternary structure, V-ATPase is a heteromultimeric enzyme made up of two complexes: the ATP-hydrolytic V1 complex and the proton translocation V0 complex. The V1 complex consists of three catalytic AB heterodimers that form a heterohexamer, three peripheral stalks each consisting of EG heterodimers, one central rotor including subunits D and F, and the regulatory subunits C and H. The proton translocation complex V0 consists of the proton transport subunit a, a ring of proteolipid subunits c9c'', rotary subunit d, subunits e and f, and the accessory subunits VhaAC45 and ATP6AP2.

Its function is as follows. Subunit of the V1 complex of vacuolar(H+)-ATPase (V-ATPase), a multisubunit enzyme composed of a peripheral complex (V1) that hydrolyzes ATP and a membrane integral complex (V0) that translocates protons. V-ATPase is responsible for acidifying and maintaining the pH of intracellular compartments and in some cell types, is targeted to the plasma membrane, where it is responsible for acidifying the extracellular environment. The sequence is that of V-type proton ATPase subunit F 1 (Vha14-1) from Drosophila melanogaster (Fruit fly).